The following is a 195-amino-acid chain: MNAIDAVIDSFSRLPGIGHKSAARIAYHLLKQGPADALRLAEAVSTLHEKIHPCTICGSYTEDEICSICADETRDRATICVVGFPQDVNTISSIPEYRGLFHVLGGLIAPLEGIGPDQLHISELIRRIHEGGITEVILATNPTIEGDTTALYIQKILQDLPVNITRLASGLPVGGDLEYADRLTLARSLNGRIKF.

A C4-type zinc finger spans residues 54 to 69 (CTICGSYTEDEICSIC). A Toprim domain is found at 77-172 (ATICVVGFPQ…NITRLASGLP (96 aa)).

It belongs to the RecR family.

In terms of biological role, may play a role in DNA repair. It seems to be involved in an RecBC-independent recombinational process of DNA repair. It may act with RecF and RecO. This chain is Recombination protein RecR, found in Treponema denticola (strain ATCC 35405 / DSM 14222 / CIP 103919 / JCM 8153 / KCTC 15104).